The sequence spans 290 residues: Elongation factor Ts (290 aa).

The interval 82–85 (TDFV) is involved in Mg(2+) ion dislocation from EF-Tu.

The protein belongs to the EF-Ts family.

It is found in the cytoplasm. Associates with the EF-Tu.GDP complex and induces the exchange of GDP to GTP. It remains bound to the aminoacyl-tRNA.EF-Tu.GTP complex up to the GTP hydrolysis stage on the ribosome. This Thiobacillus denitrificans (strain ATCC 25259 / T1) protein is Elongation factor Ts.